The sequence spans 231 residues: 5'-methylthioadenosine/S-adenosylhomocysteine nucleosidase (231 aa).

Glu13 serves as the catalytic Proton acceptor. Substrate-binding positions include Gly79, Met153, and 174–175; that span reads ME. Asp198 (proton donor) is an active-site residue.

This sequence belongs to the PNP/UDP phosphorylase family. MtnN subfamily.

The enzyme catalyses S-adenosyl-L-homocysteine + H2O = S-(5-deoxy-D-ribos-5-yl)-L-homocysteine + adenine. It carries out the reaction S-methyl-5'-thioadenosine + H2O = 5-(methylsulfanyl)-D-ribose + adenine. It catalyses the reaction 5'-deoxyadenosine + H2O = 5-deoxy-D-ribose + adenine. The protein operates within amino-acid biosynthesis; L-methionine biosynthesis via salvage pathway; S-methyl-5-thio-alpha-D-ribose 1-phosphate from S-methyl-5'-thioadenosine (hydrolase route): step 1/2. Catalyzes the irreversible cleavage of the glycosidic bond in both 5'-methylthioadenosine (MTA) and S-adenosylhomocysteine (SAH/AdoHcy) to adenine and the corresponding thioribose, 5'-methylthioribose and S-ribosylhomocysteine, respectively. Also cleaves 5'-deoxyadenosine, a toxic by-product of radical S-adenosylmethionine (SAM) enzymes, into 5-deoxyribose and adenine. The chain is 5'-methylthioadenosine/S-adenosylhomocysteine nucleosidase from Halalkalibacterium halodurans (strain ATCC BAA-125 / DSM 18197 / FERM 7344 / JCM 9153 / C-125) (Bacillus halodurans).